Here is a 159-residue protein sequence, read N- to C-terminus: Large ribosomal subunit protein uL23m (159 aa).

This sequence belongs to the universal ribosomal protein uL23 family. In terms of assembly, component of the mitochondrial ribosome large subunit (39S) which comprises a 16S rRNA and about 50 distinct proteins.

The protein resides in the mitochondrion. This chain is Large ribosomal subunit protein uL23m (mrpl-23), found in Caenorhabditis elegans.